The primary structure comprises 942 residues: PH and SEC7 domain-containing protein C11E3.11c (942 aa).

Residues 1–18 (MSRNASNAYLKNGNSTPS) show a composition bias toward polar residues. 2 disordered regions span residues 1-128 (MSRN…TRLN) and 259-308 (SRNL…ETTR). Over residues 24 to 40 (PSSLSQRSKTSTRSSKP) the composition is skewed to low complexity. 4 stretches are compositionally biased toward polar residues: residues 50-60 (WFKNESSSRHP), 90-125 (ASMS…SSRT), 271-284 (YGNS…SSNY), and 292-305 (NRQS…STSE). In terms of domain architecture, SEC7 spans 295–497 (SSLSIPKSTS…LSSYKSFASN (203 aa)). The 124-residue stretch at 681–804 (PYIKQGILKF…WIDALNYWAA (124 aa)) folds into the PH domain.

The sequence is that of PH and SEC7 domain-containing protein C11E3.11c from Schizosaccharomyces pombe (strain 972 / ATCC 24843) (Fission yeast).